The following is a 588-amino-acid chain: Synaptotagmin-3 (588 aa).

Residues 1 to 54 (MSGDYEDDLCRRALILVSDLCARIRDADTNDRCQEFNELRIRGYPRGPDADISV) are Vesicular-facing. A cysteine motif region spans residues 10–34 (CRRALILVSDLCARIRDADTNDRCQ). The helical transmembrane segment at 55-75 (SLLSVIVTFCGIVLLGVSLFV) threads the bilayer. Residues 76–588 (SWKLCWVPWR…KGLSEKENSE (513 aa)) are Cytoplasmic-facing. Disordered stretches follow at residues 129 to 161 (GGPH…PEPS), 183 to 222 (PSQT…VTSL), and 238 to 257 (QTLT…ALPL). Over residues 183–205 (PSQTSPELPSEGGTGSGLLLLPP) the composition is skewed to low complexity. The segment covering 213-222 (AQSHQQVTSL) has biased composition (polar residues). R286 bears the Omega-N-methylarginine mark. C2 domains lie at 297–418 (PCGR…PLWR) and 429–563 (DLGE…EHWH). D328, D334, D386, F387, D388, S391, D394, D460, D466, D520, and D522 together coordinate Ca(2+).

This sequence belongs to the synaptotagmin family. In terms of assembly, homodimer; disulfide-linked via the cysteine motif. Can also form heterodimers with SYT6, SYT9 and SYT10. Ca(2+) serves as cofactor. As to expression, brain, various endocrine tissues and hormone-secreting clonal cells.

It is found in the cell membrane. The protein localises to the cytoplasmic vesicle. Its subcellular location is the secretory vesicle membrane. Ca(2+) sensor involved in Ca(2+)-dependent exocytosis of secretory vesicles through Ca(2+) and phospholipid binding to the C2 domain. Ca(2+) induces binding of the C2-domains to phospholipid membranes and to assembled SNARE-complexes; both actions contribute to triggering exocytosis. Plays a role in dendrite formation by melanocytes. This Rattus norvegicus (Rat) protein is Synaptotagmin-3 (Syt3).